The following is a 158-amino-acid chain: Ribonuclease HI (158 aa).

One can recognise an RNase H type-1 domain in the interval 3 to 144 (ELKLIHIFTD…CDQLARAAAE (142 aa)). Residues D12, E50, D72, and D136 each contribute to the Mg(2+) site.

This sequence belongs to the RNase H family. In terms of assembly, monomer. Requires Mg(2+) as cofactor.

It localises to the cytoplasm. The catalysed reaction is Endonucleolytic cleavage to 5'-phosphomonoester.. In terms of biological role, endonuclease that specifically degrades the RNA of RNA-DNA hybrids. The protein is Ribonuclease HI of Shewanella oneidensis (strain ATCC 700550 / JCM 31522 / CIP 106686 / LMG 19005 / NCIMB 14063 / MR-1).